The sequence spans 481 residues: ATP synthase subunit alpha (481 aa).

145 to 152 (GDRQTGKT) lines the ATP pocket.

This sequence belongs to the ATPase alpha/beta chains family. In terms of assembly, F-type ATPases have 2 components, CF(1) - the catalytic core - and CF(0) - the membrane proton channel. CF(1) has five subunits: alpha(3), beta(3), gamma(1), delta(1), epsilon(1). CF(0) has three main subunits: a(1), b(2) and c(9-12). The alpha and beta chains form an alternating ring which encloses part of the gamma chain. CF(1) is attached to CF(0) by a central stalk formed by the gamma and epsilon chains, while a peripheral stalk is formed by the delta and b chains.

Its subcellular location is the cell membrane. It carries out the reaction ATP + H2O + 4 H(+)(in) = ADP + phosphate + 5 H(+)(out). In terms of biological role, produces ATP from ADP in the presence of a proton gradient across the membrane. The alpha chain is a regulatory subunit. This chain is ATP synthase subunit alpha, found in Carsonella ruddii (strain PV).